We begin with the raw amino-acid sequence, 302 residues long: N-acetylmuramic acid 6-phosphate etherase (302 aa).

One can recognise an SIS domain in the interval 58-221 (IGKAFLNGGR…STGAMVKTGK (164 aa)). Residue glutamate 86 is the Proton donor of the active site. Glutamate 117 is an active-site residue.

The protein belongs to the GCKR-like family. MurNAc-6-P etherase subfamily. In terms of assembly, homodimer.

The catalysed reaction is N-acetyl-D-muramate 6-phosphate + H2O = N-acetyl-D-glucosamine 6-phosphate + (R)-lactate. Its pathway is amino-sugar metabolism; N-acetylmuramate degradation. In terms of biological role, specifically catalyzes the cleavage of the D-lactyl ether substituent of MurNAc 6-phosphate, producing GlcNAc 6-phosphate and D-lactate. In Clostridium botulinum (strain Loch Maree / Type A3), this protein is N-acetylmuramic acid 6-phosphate etherase.